Reading from the N-terminus, the 311-residue chain is Ribonuclease HIII (311 aa).

The region spanning 95–311 (MSIVGSDEVG…NTEKAFRLLK (217 aa)) is the RNase H type-2 domain. A divalent metal cation contacts are provided by Asp-101, Glu-102, and Asp-206.

It belongs to the RNase HII family. RnhC subfamily. The cofactor is Mn(2+). Mg(2+) serves as cofactor.

It is found in the cytoplasm. The catalysed reaction is Endonucleolytic cleavage to 5'-phosphomonoester.. Its function is as follows. Endonuclease that specifically degrades the RNA of RNA-DNA hybrids. The protein is Ribonuclease HIII of Bacillus thuringiensis subsp. konkukian (strain 97-27).